Here is a 267-residue protein sequence, read N- to C-terminus: Hydroxyethylthiazole kinase (267 aa).

M51 lines the substrate pocket. Residues R127 and S173 each contribute to the ATP site. A200 contacts substrate.

This sequence belongs to the Thz kinase family. The cofactor is Mg(2+).

The enzyme catalyses 5-(2-hydroxyethyl)-4-methylthiazole + ATP = 4-methyl-5-(2-phosphooxyethyl)-thiazole + ADP + H(+). Its pathway is cofactor biosynthesis; thiamine diphosphate biosynthesis; 4-methyl-5-(2-phosphoethyl)-thiazole from 5-(2-hydroxyethyl)-4-methylthiazole: step 1/1. Catalyzes the phosphorylation of the hydroxyl group of 4-methyl-5-beta-hydroxyethylthiazole (THZ). The sequence is that of Hydroxyethylthiazole kinase from Psychromonas ingrahamii (strain DSM 17664 / CCUG 51855 / 37).